Consider the following 438-residue polypeptide: Probable tRNA pseudouridine synthase D (438 aa).

The Nucleophile role is filled by aspartate 86. One can recognise a TRUD domain in the interval 165-390; it reads GVPNFFGIQR…SKGTRRELLL (226 aa).

This sequence belongs to the pseudouridine synthase TruD family.

The catalysed reaction is uridine(13) in tRNA = pseudouridine(13) in tRNA. In terms of biological role, could be responsible for synthesis of pseudouridine from uracil-13 in transfer RNAs. This chain is Probable tRNA pseudouridine synthase D, found in Methanosarcina barkeri (strain Fusaro / DSM 804).